The sequence spans 223 residues: Thymidine kinase (223 aa).

ATP-binding positions include 19–26 and 96–99; these read GPMFAGKT and DEVQ. Glu97 (proton acceptor) is an active-site residue. Cys153, Cys156, Cys191, and His194 together coordinate Zn(2+).

This sequence belongs to the thymidine kinase family. Homotetramer.

Its subcellular location is the cytoplasm. The catalysed reaction is thymidine + ATP = dTMP + ADP + H(+). This Ureaplasma parvum serovar 3 (strain ATCC 27815 / 27 / NCTC 11736) protein is Thymidine kinase.